The chain runs to 55 residues: Conotoxin Cal14.14 (55 aa).

Residues 1–20 (MFRLGVFLLTFLLLVSMATS) form the signal peptide. Intrachain disulfides connect Cys-34–Cys-48 and Cys-38–Cys-52.

As to expression, expressed by the venom duct.

The protein localises to the secreted. Its function is as follows. Probable neurotoxin. This Californiconus californicus (California cone) protein is Conotoxin Cal14.14.